The primary structure comprises 550 residues: Hydroxylamine reductase (550 aa).

The [2Fe-2S] cluster site is built by cysteine 3, cysteine 6, cysteine 18, and cysteine 25. 8 residues coordinate hybrid [4Fe-2O-2S] cluster: histidine 249, glutamate 273, cysteine 317, cysteine 405, cysteine 433, cysteine 458, glutamate 492, and lysine 494. Cysteine 405 is modified (cysteine persulfide).

The protein belongs to the HCP family. [2Fe-2S] cluster is required as a cofactor. The cofactor is hybrid [4Fe-2O-2S] cluster.

Its subcellular location is the cytoplasm. The catalysed reaction is A + NH4(+) + H2O = hydroxylamine + AH2 + H(+). Functionally, catalyzes the reduction of hydroxylamine to form NH(3) and H(2)O. This Escherichia coli (strain SMS-3-5 / SECEC) protein is Hydroxylamine reductase.